The sequence spans 279 residues: MTQSVSLSDFIVKTEDGYMPSDRECIALDRYLSKEQKELRETFKDGKNDRAALRIKMFLCPSPSRRFTQHGVVPMREIKTNTDMPSTLWTLVTDWLLNLLQDEENQEMFEDFISSKFPDVLASADKLARFAQRLEDRKDVLRKNFGKAMNAFGACFWAIKPTFATEGKCNVVRASDDSIILEFQPVPEYFRCGKSKATFYKLYPLSDEQPVNGMLALKAVAGNQFFMYHGHGHIRTVPYHELLTLSNHSLVKIKKRSKTFLNHHSQLNVVVNFSICSME.

Residues 119-121 (DVL), Lys201, and 229-231 (HGH) contribute to the ATP site. The interval 214 to 249 (MLALKAVAGNQFFMYHGHGHIRTVPYHELLTLSNHS) is RNA-binding. The active-site For NTPase and RTPase activities is His233. Arg235 is a binding site for ATP.

It belongs to the rotavirus NSP2 family. Homooctamer. Interacts with VP1; this interaction is weak. Interacts with NSP5; this interaction leads to up-regulation of NSP5 phosphorylation and formation of viral factories. The cofactor is Mg(2+).

It is found in the host cytoplasm. In terms of biological role, participates in replication and packaging of the viral genome. Plays a crucial role, together with NSP5, in the formation of virus factories (viroplasms) which are large inclusions in the host cytoplasm where replication intermediates are assembled and viral RNA replication takes place. Displays ssRNA binding, NTPase, RNA triphosphatase (RTPase) and ATP-independent helix-unwinding activities. The unwinding activity may prepare and organize plus-strand RNAs for packaging and replication by removing interfering secondary structures. The RTPase activity plays a role in the removal of the gamma-phosphate from the rotavirus RNA minus strands of dsRNA genome segments. This Homo sapiens (Human) protein is Non-structural protein 2.